We begin with the raw amino-acid sequence, 359 residues long: Dual-specificity RNA methyltransferase RlmN (359 aa).

Glu86 acts as the Proton acceptor in catalysis. A Radical SAM core domain is found at 105-338 (EGEKYTICVS…CTIRESKGID (234 aa)). Cys112 and Cys343 are oxidised to a cystine. The [4Fe-4S] cluster site is built by Cys119, Cys123, and Cys126. S-adenosyl-L-methionine-binding positions include 169–170 (GE), Ser201, 224–226 (SLH), and Asn300. Cys343 functions as the S-methylcysteine intermediate in the catalytic mechanism.

It belongs to the radical SAM superfamily. RlmN family. Requires [4Fe-4S] cluster as cofactor.

It localises to the cytoplasm. It carries out the reaction adenosine(2503) in 23S rRNA + 2 reduced [2Fe-2S]-[ferredoxin] + 2 S-adenosyl-L-methionine = 2-methyladenosine(2503) in 23S rRNA + 5'-deoxyadenosine + L-methionine + 2 oxidized [2Fe-2S]-[ferredoxin] + S-adenosyl-L-homocysteine. The catalysed reaction is adenosine(37) in tRNA + 2 reduced [2Fe-2S]-[ferredoxin] + 2 S-adenosyl-L-methionine = 2-methyladenosine(37) in tRNA + 5'-deoxyadenosine + L-methionine + 2 oxidized [2Fe-2S]-[ferredoxin] + S-adenosyl-L-homocysteine. Its function is as follows. Specifically methylates position 2 of adenine 2503 in 23S rRNA and position 2 of adenine 37 in tRNAs. m2A2503 modification seems to play a crucial role in the proofreading step occurring at the peptidyl transferase center and thus would serve to optimize ribosomal fidelity. The protein is Dual-specificity RNA methyltransferase RlmN of Wolinella succinogenes (strain ATCC 29543 / DSM 1740 / CCUG 13145 / JCM 31913 / LMG 7466 / NCTC 11488 / FDC 602W) (Vibrio succinogenes).